The following is a 518-amino-acid chain: Nuclear receptor ROR-gamma (518 aa).

The interval 1–30 is modulating; that stretch reads MDRAPQRQHQASRELLAAKKTHTSQIEVIP. 2 consecutive NR C4-type zinc fingers follow at residues 31 to 51 and 67 to 91; these read CKIC…CEGC and CTRQ…LQKC. The nuclear receptor DNA-binding region spans 31–96; sequence CKICGDKSSG…RLQKCLALGM (66 aa). 2 disordered regions span residues 105–183 and 238–258; these read RMSK…SGSG and HPGL…SFRS. Basic and acidic residues predominate over residues 109–118; sequence KQRDSLHAEV. A compositionally biased stretch (low complexity) spans 119-130; sequence QKQLQQRQQQQQ. Positions 269–508 constitute an NR LBD domain; the sequence is EIEHLVQSVC…PPLYKELFST (240 aa). An AF-2 motif is present at residues 501 to 506; it reads LYKELF.

This sequence belongs to the nuclear hormone receptor family. NR1 subfamily. Interacts (via AF-2 motif) with the coactivators NCOA1, NCOA2 and PPARGC1A (via LXXLL motif). Interacts with the corepressor NCOR1. Interacts with CRY1. Interacts (via AF-2 motif) with PROX1. Interacts with FOXP3. Interacts with NR0B2.

The protein localises to the nucleus. Its function is as follows. Nuclear receptor that binds DNA as a monomer to ROR response elements (RORE) containing a single core motif half-site 5'-AGGTCA-3' preceded by a short A-T-rich sequence. Key regulator of cellular differentiation, immunity, peripheral circadian rhythm as well as lipid, steroid, xenobiotics and glucose metabolism. Considered to have intrinsic transcriptional activity, have some natural ligands like oxysterols that act as agonists (25-hydroxycholesterol) or inverse agonists (7-oxygenated sterols), enhancing or repressing the transcriptional activity, respectively. Recruits distinct combinations of cofactors to target gene regulatory regions to modulate their transcriptional expression, depending on the tissue, time and promoter contexts. Regulates the circadian expression of clock genes such as CRY1, BMAL1 and NR1D1 in peripheral tissues and in a tissue-selective manner. Competes with NR1D1 for binding to their shared DNA response element on some clock genes such as BMAL1, CRY1 and NR1D1 itself, resulting in NR1D1-mediated repression or RORC-mediated activation of the expression, leading to the circadian pattern of clock genes expression. Therefore influences the period length and stability of the clock. Involved in the regulation of the rhythmic expression of genes involved in glucose and lipid metabolism, including PLIN2 and AVPR1A. Negative regulator of adipocyte differentiation through the regulation of early phase genes expression, such as MMP3. Controls adipogenesis as well as adipocyte size and modulates insulin sensitivity in obesity. In liver, has specific and redundant functions with RORA as positive or negative modulator of expression of genes encoding phase I and Phase II proteins involved in the metabolism of lipids, steroids and xenobiotics, such as SULT1E1. Also plays a role in the regulation of hepatocyte glucose metabolism through the regulation of G6PC1 and PCK1. Essential for thymopoiesis and the development of several secondary lymphoid tissues, including lymph nodes and Peyer's patches. Required for the generation of LTi (lymphoid tissue inducer) cells. Regulates thymocyte survival through DNA-binding on ROREs of target gene promoter regions and recruitment of coactivaros via the AF-2. Also plays a key role, downstream of IL6 and TGFB and synergistically with RORA, for lineage specification of uncommitted CD4(+) T-helper (T(H)) cells into T(H)17 cells, antagonizing the T(H)1 program. Probably regulates IL17 and IL17F expression on T(H) by binding to the essential enhancer conserved non-coding sequence 2 (CNS2) in the IL17-IL17F locus. May also play a role in the pre-TCR activation cascade leading to the maturation of alpha/beta T-cells and may participate in the regulation of DNA accessibility in the TCR-J(alpha) locus. Regulates the rhythmic expression of PROX1 and promotes its nuclear localization. Plays an indispensable role in the induction of IFN-gamma dependent anti-mycobacterial systemic immunity. In Pongo abelii (Sumatran orangutan), this protein is Nuclear receptor ROR-gamma (RORC).